The sequence spans 200 residues: Mediator of RNA polymerase II transcription subunit 22 (200 aa).

Positions 93–122 (SVNEAIDQRNQQLRALQEECDRKLITLRDE) form a coiled coil. Residues 169–200 (PLLASPETGAGPLQSAAPVHSHGGGPGPTEHT) form a disordered region. Gly residues predominate over residues 190 to 200 (HGGGPGPTEHT).

It belongs to the Mediator complex subunit 22 family. As to quaternary structure, component of the Mediator complex, which is composed of MED1, MED4, MED6, MED7, MED8, MED9, MED10, MED11, MED12, MED13, MED13L, MED14, MED15, MED16, MED17, MED18, MED19, MED20, MED21, MED22, MED23, MED24, MED25, MED26, MED27, MED29, MED30, MED31, CCNC, CDK8 and CDC2L6/CDK11. The MED12, MED13, CCNC and CDK8 subunits form a distinct module termed the CDK8 module. Mediator containing the CDK8 module is less active than Mediator lacking this module in supporting transcriptional activation. Individual preparations of the Mediator complex lacking one or more distinct subunits have been variously termed ARC, CRSP, DRIP, PC2, SMCC and TRAP.

It localises to the nucleus. Its function is as follows. Component of the Mediator complex, a coactivator involved in the regulated transcription of nearly all RNA polymerase II-dependent genes. Mediator functions as a bridge to convey information from gene-specific regulatory proteins to the basal RNA polymerase II transcription machinery. Mediator is recruited to promoters by direct interactions with regulatory proteins and serves as a scaffold for the assembly of a functional preinitiation complex with RNA polymerase II and the general transcription factors. This chain is Mediator of RNA polymerase II transcription subunit 22 (Med22), found in Mus musculus (Mouse).